The following is a 640-amino-acid chain: Kelch-like protein 17 (640 aa).

The interval 1 to 50 is disordered; sequence MQPRGERPAGRTQSPEHSSPGPGPEAPPPPQPPAPEAERARPRQARPAAP. Pro residues predominate over residues 21 to 35; the sequence is GPGPEAPPPPQPPAP. The BTB domain maps to 90-157; that stretch reads CDIVLHVAAK…AYTAEIVVGE (68 aa). The BACK domain occupies 192-294; sequence CLGIRGFADT…SRDFLLGHVD (103 aa). Positions 287–639 are interaction with F-actin; sequence DFLLGHVDAE…SPTLSVSSTS (353 aa). 6 Kelch repeats span residues 341-387, 388-434, 436-481, 482-528, 530-575, and 576-622; these read VLFA…AVGN, RLYA…ALHG, LYAA…TLDG, NLYA…VLEG, LYVA…AMDG, and WLYA…VLEL. The interval 638–640 is interaction with PDZK1; sequence TSL.

In terms of assembly, interacts with F-actin; the interaction disrupts the F-actin structures and leads to marked changes of neuronal morphology. Component of a complex, composed of PDZK1, SYNGAP1, KLHL17 and NMDA receptors. Interacts directly with PDZK1 (via PDZ1 domain); the interaction is important for integrity of actin cytoskeleton structures in neurons. Interacts with DLG4 and SYNGAP1. Interacts (via kelch repeats) with GRIK2 (via C-terminus); the interaction targets GRIK2 for degradation via ubiquitin-proteasome pathway. Interacts with GRIK1. Interacts with (via BTB domain) CUL3; the interaction regulates surface GRIK2 expression.

The protein resides in the postsynaptic density. It localises to the synapse. Its pathway is protein modification; protein ubiquitination. Substrate-recognition component of some cullin-RING-based BCR (BTB-CUL3-RBX1) E3 ubiquitin-protein ligase complexes. The BCR(KLHL17) complex mediates the ubiquitination and subsequent degradation of GLUR6. May play a role in the actin-based neuronal function. The sequence is that of Kelch-like protein 17 (Klhl17) from Mus musculus (Mouse).